Reading from the N-terminus, the 363-residue chain is NudC domain-containing protein 3 (363 aa).

A disordered region spans residues 120–143 (AADLSGPQEVEKEEPPGSQDPEHT). Basic and acidic residues predominate over residues 128–143 (EVEKEEPPGSQDPEHT). One can recognise a CS domain in the interval 187-279 (AIRENYIWSQ…VGEYWWSAIL (93 aa)). Residues serine 342 and serine 357 each carry the phosphoserine modification.

The sequence is that of NudC domain-containing protein 3 (Nudcd3) from Mus musculus (Mouse).